The following is a 460-amino-acid chain: Mitochondrial distribution and morphology protein 34 (460 aa).

In terms of domain architecture, SMP-LTD spans 1–196; it reads MSFKFDWESL…LPGIIHRLSQ (196 aa). Over residues 304–321 the composition is skewed to basic residues; that stretch reads HNHQAPKRRTIKYKRKSK. 2 disordered regions span residues 304 to 356 and 368 to 460; these read HNHQ…PSRE and EPSS…AYSG. Low complexity-rich tracts occupy residues 330–355 and 393–405; these read STEV…TPSR and SPPS…DTSL.

The protein belongs to the MDM34 family. As to quaternary structure, component of the ER-mitochondria encounter structure (ERMES) or MDM complex, composed of MMM1, MDM10, MDM12 and MDM34.

The protein resides in the mitochondrion outer membrane. In terms of biological role, component of the ERMES/MDM complex, which serves as a molecular tether to connect the endoplasmic reticulum (ER) and mitochondria. Components of this complex are involved in the control of mitochondrial shape and protein biogenesis, and function in nonvesicular lipid trafficking between the ER and mitochondria. MDM34 is required for the interaction of the ER-resident membrane protein MMM1 and the outer mitochondrial membrane-resident beta-barrel protein MDM10. This chain is Mitochondrial distribution and morphology protein 34, found in Yarrowia lipolytica (strain CLIB 122 / E 150) (Yeast).